A 598-amino-acid polypeptide reads, in one-letter code: Aspartate--tRNA(Asp/Asn) ligase (598 aa).

An L-aspartate-binding site is contributed by Glu-177. Residues 201 to 204 (QLFK) are aspartate. Residue Arg-223 coordinates L-aspartate. Residues 223–225 (RDE) and Gln-232 each bind ATP. His-456 provides a ligand contact to L-aspartate. Glu-493 contributes to the ATP binding site. Arg-500 contacts L-aspartate. 545–548 (GLDR) serves as a coordination point for ATP.

The protein belongs to the class-II aminoacyl-tRNA synthetase family. Type 1 subfamily. In terms of assembly, homodimer.

It is found in the cytoplasm. It carries out the reaction tRNA(Asx) + L-aspartate + ATP = L-aspartyl-tRNA(Asx) + AMP + diphosphate. Functionally, aspartyl-tRNA synthetase with relaxed tRNA specificity since it is able to aspartylate not only its cognate tRNA(Asp) but also tRNA(Asn). Reaction proceeds in two steps: L-aspartate is first activated by ATP to form Asp-AMP and then transferred to the acceptor end of tRNA(Asp/Asn). This is Aspartate--tRNA(Asp/Asn) ligase from Prochlorococcus marinus (strain MIT 9301).